Reading from the N-terminus, the 212-residue chain is ATP-dependent dethiobiotin synthetase BioD (212 aa).

12–17 contributes to the ATP binding site; the sequence is DCGKTF. Residue Thr-16 coordinates Mg(2+). Lys-33 is an active-site residue. Ser-37 provides a ligand contact to substrate. Residues Asp-50, 110 to 113, and 170 to 171 each bind ATP; these read EGAG and NC. Mg(2+) is bound by residues Asp-50 and Glu-110.

It belongs to the dethiobiotin synthetase family. In terms of assembly, homodimer. Mg(2+) is required as a cofactor.

It is found in the cytoplasm. It catalyses the reaction (7R,8S)-7,8-diammoniononanoate + CO2 + ATP = (4R,5S)-dethiobiotin + ADP + phosphate + 3 H(+). Its pathway is cofactor biosynthesis; biotin biosynthesis; biotin from 7,8-diaminononanoate: step 1/2. Catalyzes a mechanistically unusual reaction, the ATP-dependent insertion of CO2 between the N7 and N8 nitrogen atoms of 7,8-diaminopelargonic acid (DAPA, also called 7,8-diammoniononanoate) to form a ureido ring. The polypeptide is ATP-dependent dethiobiotin synthetase BioD (Legionella pneumophila (strain Corby)).